Here is a 433-residue protein sequence, read N- to C-terminus: Trigger factor (433 aa).

One can recognise a PPIase FKBP-type domain in the interval 163 to 248 (GDTVNIDFSG…VNEIKFKEVP (86 aa)).

Belongs to the FKBP-type PPIase family. Tig subfamily.

It localises to the cytoplasm. The catalysed reaction is [protein]-peptidylproline (omega=180) = [protein]-peptidylproline (omega=0). In terms of biological role, involved in protein export. Acts as a chaperone by maintaining the newly synthesized protein in an open conformation. Functions as a peptidyl-prolyl cis-trans isomerase. The protein is Trigger factor of Staphylococcus aureus (strain bovine RF122 / ET3-1).